Here is a 682-residue protein sequence, read N- to C-terminus: MFRKKKKKRPEISAPQNFQHRVHTSFDPKEGKFVGLPPQWQNILDTLRRPKPVVDPSRITRVQLQPMKTVVRGSSVPTEGYISGLLNDIQKLSVISSNTLRGRSPTSRRRAQSLGLLGDDQWAADPDMYLQSPQSEHTDPHGLYLSCNGGTPAGHRQVPWPEPQSPQALPNGMAAKAQSLGPAEFQGASQRCLQQLGACLQSSPPGTSPPMATGRRGVKVAKHSSEEARPQSCLVGSAIGRPGGEGSPSPKNQESSLKHRLFRSMFLSTPATGAASSSKPVPLPQNKPNSAFRPPQKDSSSNLVAKAQSLPSEQPMGTFSPLTTSDTSSPQKSLRTAPAAGPLPGRSSPAGSPRTRHAQISTSNLYLPQDPTVAKGALGGEDTGIVTHEQFKAALRMVVDQGDPRLLLDSYVKIGEGSTGIVCLAREKHSGRQVAVKMMDLRKQQRRELLFNEVVIMRDYQHLNVVEMYKSYLVGEELWVLMEFLQGGALTDIISQVRLNEEQIATVCEAVLQALAYLHAQGVIHRDIKSDSILLTLDGRVKLSDFGFCAQISKDVPKRKSLVGTPYWMAPEVISRSLYATEVDIWSLGIMVIEMVDGEPPYFSDSPVQAMKRLRDSAPPKLKNSYKVSPVLRDFLDRMLVREPQERATAQELLDHPFLLQTGLPECLVPLIQLYRKQTSTC.

Disordered regions lie at residues 1-30, 132-170, 200-256, and 270-367; these read MFRK…DPKE, SPQS…QALP, LQSS…QESS, and PATG…NLYL. A CRIB domain is found at 12-25; sequence ISAPQNFQHRVHTS. A linker region spans residues 26-407; that stretch reads FDPKEGKFVG…VVDQGDPRLL (382 aa). Polar residues-rich tracts occupy residues 270 to 279 and 297 to 334; these read PATGAASSSK and KDSS…QKSL. The region spanning 408–659 is the Protein kinase domain; that stretch reads LDSYVKIGEG…AQELLDHPFL (252 aa). ATP-binding positions include 414 to 422 and Lys437; that span reads IGEGSTGIV. Asp527 acts as the Proton acceptor in catalysis. Ser561 is subject to Phosphoserine; by autocatalysis.

Belongs to the protein kinase superfamily. STE Ser/Thr protein kinase family. STE20 subfamily. In terms of assembly, interacts tightly with GTP-bound but not GDP-bound CDC42/p21 and RAC1. Interacts with the androgen receptor AR. Interacts with IQGAP1 and PPM1B. Post-translationally, autophosphorylated. Phosphorylated by MAP2K6/MAPKK6, leading to PAK6 activation.

The protein localises to the cytoplasm. It is found in the nucleus. It catalyses the reaction L-seryl-[protein] + ATP = O-phospho-L-seryl-[protein] + ADP + H(+). It carries out the reaction L-threonyl-[protein] + ATP = O-phospho-L-threonyl-[protein] + ADP + H(+). Serine/threonine protein kinase that plays a role in the regulation of gene transcription. The kinase activity is induced by various effectors including AR or MAP2K6/MAPKK6. Phosphorylates the DNA-binding domain of androgen receptor/AR and thereby inhibits AR-mediated transcription. Also inhibits ESR1-mediated transcription. May play a role in cytoskeleton regulation by interacting with IQGAP1. May protect cells from apoptosis through phosphorylation of BAD. The protein is Serine/threonine-protein kinase PAK 6 (Pak6) of Mus musculus (Mouse).